Consider the following 161-residue polypeptide: Regulator of ribonuclease activity A (161 aa).

The protein belongs to the RraA family. Homotrimer. Binds to both RNA-binding sites in the C-terminal region of Rne and to RhlB.

It localises to the cytoplasm. Its function is as follows. Globally modulates RNA abundance by binding to RNase E (Rne) and regulating its endonucleolytic activity. Can modulate Rne action in a substrate-dependent manner by altering the composition of the degradosome. Modulates RNA-binding and helicase activities of the degradosome. This chain is Regulator of ribonuclease activity A, found in Cronobacter sakazakii (strain ATCC BAA-894) (Enterobacter sakazakii).